Here is a 145-residue protein sequence, read N- to C-terminus: Hemoglobin fetal subunit beta (145 aa).

In terms of domain architecture, Globin spans 1–145 (MLSAEEKASV…VANALAHRYH (145 aa)). The heme b site is built by histidine 62 and histidine 91.

It belongs to the globin family. In terms of assembly, heterotetramer of two alpha chains and two beta chains. In terms of tissue distribution, red blood cells.

Functionally, involved in oxygen transport from the lung to the various peripheral tissues. This chain is Hemoglobin fetal subunit beta, found in Capra hircus (Goat).